A 613-amino-acid polypeptide reads, in one-letter code: ADP-ribosylation factor-binding protein GGA2 (613 aa).

In terms of domain architecture, VHS spans 33 to 163 (ATDPSMSEQD…MLKKQGIIKQ (131 aa)). Residues 188-315 (DEEKSKLLTR…GVLLYKQVME (128 aa)) form the GAT domain. Residues 316–483 (GRVTFGNRVT…VFVPLESVKP (168 aa)) form a unstructured hinge region. 2 disordered regions span residues 389-414 (GQNC…NPSA) and 435-466 (SQKS…SPSS). Residues 399–414 (PSSSTLPGGGVQNPSA) are compositionally biased toward polar residues. Ser-400 is subject to Phosphoserine. Residues 484–605 (SSLPPLIVYD…SEVGEVKDFP (122 aa)) enclose the GAE domain.

It belongs to the GGA protein family. As to quaternary structure, monomer. Interacts with NECAP1, TSG101, UBC and AFTPH/aftiphilin. Interacts with CNST. Interacts with GGA1 and GGA3. Binds to clathrin and activated ARFs, such as ARF1, ARF5 and ARF6. Binds RABEP1 and RABGEF1. Interacts with the type-I membrane proteins LRP3, M6PR/CD-MPR, IGF2R/CI-MPR and BACE1. Interacts (via N-terminal VHS domain) with SORL1/sorLA and SORT1 (via C-terminal cytosolic domain). Binds the accessory proteins CCDC91, P200, SYNRG, EPN4 and NECAP2. Interacts with ADRA2B. Interacts (via VHS domain) with PIK4B; the interaction is important for PIK4B location at the Golgi apparatus membrane. Ubiquitinated. In terms of tissue distribution, ubiquitously expressed.

Its subcellular location is the golgi apparatus. It localises to the trans-Golgi network membrane. The protein localises to the endosome membrane. It is found in the early endosome membrane. In terms of biological role, plays a role in protein sorting and trafficking between the trans-Golgi network (TGN) and endosomes. Mediates the ARF-dependent recruitment of clathrin to the TGN and binds ubiquitinated proteins and membrane cargo molecules with a cytosolic acidic cluster-dileucine (DXXLL) motif. Mediates export of the GPCR receptor ADRA2B to the cell surface. Regulates retrograde transport of phosphorylated form of BACE1 from endosomes to the trans-Golgi network. The protein is ADP-ribosylation factor-binding protein GGA2 (GGA2) of Homo sapiens (Human).